The following is a 470-amino-acid chain: Uronate isomerase (470 aa).

The protein belongs to the metallo-dependent hydrolases superfamily. Uronate isomerase family.

The catalysed reaction is D-glucuronate = D-fructuronate. The enzyme catalyses aldehydo-D-galacturonate = keto-D-tagaturonate. The protein operates within carbohydrate metabolism; pentose and glucuronate interconversion. This is Uronate isomerase from Escherichia coli O17:K52:H18 (strain UMN026 / ExPEC).